A 284-amino-acid polypeptide reads, in one-letter code: Tegument protein UL23 (284 aa).

Belongs to the herpesviridae US22 family. Interacts with host NMI; this interaction inhibits NMI interaction with STAT1.

It localises to the virion tegument. It is found in the host cytoplasm. In terms of biological role, plays a role in the inhibition of host innate immune response by disrupting the interaction between NMI and STAT1. In turn, NMI-mediated transcription of interferon-gamma stimulated genes is inhibited. The protein is Tegument protein UL23 (UL23) of Homo sapiens (Human).